The chain runs to 480 residues: Major capsid protein (480 aa).

Its subcellular location is the virion. Major protein of the capsid. This Trichoplusia ni ascovirus 2c (TnAV-2c) protein is Major capsid protein (MCP-1).